Consider the following 264-residue polypeptide: Ribonuclease H (264 aa).

The tract at residues 55 to 88 (GSRYSSSSGPYRRSTTSYGYSPYSSSSSNYSARH) is disordered. Low complexity predominate over residues 56-85 (SRYSSSSGPYRRSTTSYGYSPYSSSSSNYS). A Phosphoserine modification is found at S97. The RNase H type-1 domain maps to 120–263 (CSDRQVVYAD…ADMLARRGAS (144 aa)). The Mg(2+) site is built by D129, E171, D191, and D255.

The protein belongs to the RNase H family. Requires Mg(2+) as cofactor.

The enzyme catalyses Endonucleolytic cleavage to 5'-phosphomonoester.. Endonuclease that specifically degrades the RNA of RNA-DNA hybrids. The chain is Ribonuclease H (rnh1) from Schizosaccharomyces pombe (strain 972 / ATCC 24843) (Fission yeast).